The sequence spans 420 residues: Tyrosine--tRNA ligase (420 aa).

Residue Tyr-33 coordinates L-tyrosine. Positions 38-47 (PTADSLHVGH) match the 'HIGH' region motif. 2 residues coordinate L-tyrosine: Tyr-167 and Gln-171. The short motif at 227-231 (KFGKT) is the 'KMSKS' region element. Residue Lys-230 coordinates ATP. Positions 353-419 (LTVADLLVKV…GKRNYALVKV (67 aa)) constitute an S4 RNA-binding domain.

The protein belongs to the class-I aminoacyl-tRNA synthetase family. TyrS type 1 subfamily. Homodimer.

It localises to the cytoplasm. It catalyses the reaction tRNA(Tyr) + L-tyrosine + ATP = L-tyrosyl-tRNA(Tyr) + AMP + diphosphate + H(+). Catalyzes the attachment of tyrosine to tRNA(Tyr) in a two-step reaction: tyrosine is first activated by ATP to form Tyr-AMP and then transferred to the acceptor end of tRNA(Tyr). The chain is Tyrosine--tRNA ligase from Anaeromyxobacter dehalogenans (strain 2CP-C).